A 192-amino-acid polypeptide reads, in one-letter code: 7-methyl-GTP pyrophosphatase (192 aa).

D69 (proton acceptor) is an active-site residue.

This sequence belongs to the Maf family. YceF subfamily. The cofactor is a divalent metal cation.

The protein localises to the cytoplasm. The catalysed reaction is N(7)-methyl-GTP + H2O = N(7)-methyl-GMP + diphosphate + H(+). In terms of biological role, nucleoside triphosphate pyrophosphatase that hydrolyzes 7-methyl-GTP (m(7)GTP). May have a dual role in cell division arrest and in preventing the incorporation of modified nucleotides into cellular nucleic acids. The protein is 7-methyl-GTP pyrophosphatase of Pseudomonas aeruginosa (strain ATCC 15692 / DSM 22644 / CIP 104116 / JCM 14847 / LMG 12228 / 1C / PRS 101 / PAO1).